We begin with the raw amino-acid sequence, 94 residues long: Co-chaperonin GroES (94 aa).

Belongs to the GroES chaperonin family. Heptamer of 7 subunits arranged in a ring. Interacts with the chaperonin GroEL.

It is found in the cytoplasm. Together with the chaperonin GroEL, plays an essential role in assisting protein folding. The GroEL-GroES system forms a nano-cage that allows encapsulation of the non-native substrate proteins and provides a physical environment optimized to promote and accelerate protein folding. GroES binds to the apical surface of the GroEL ring, thereby capping the opening of the GroEL channel. This chain is Co-chaperonin GroES, found in Ligilactobacillus salivarius (strain UCC118) (Lactobacillus salivarius).